We begin with the raw amino-acid sequence, 129 residues long: Small ribosomal subunit protein uS11 (129 aa).

This sequence belongs to the universal ribosomal protein uS11 family. As to quaternary structure, part of the 30S ribosomal subunit. Interacts with proteins S7 and S18. Binds to IF-3.

Its function is as follows. Located on the platform of the 30S subunit, it bridges several disparate RNA helices of the 16S rRNA. Forms part of the Shine-Dalgarno cleft in the 70S ribosome. The protein is Small ribosomal subunit protein uS11 of Lactobacillus delbrueckii subsp. bulgaricus (strain ATCC 11842 / DSM 20081 / BCRC 10696 / JCM 1002 / NBRC 13953 / NCIMB 11778 / NCTC 12712 / WDCM 00102 / Lb 14).